Consider the following 78-residue polypeptide: ATP synthase subunit c (78 aa).

2 consecutive transmembrane segments (helical) span residues 11–31 (FIGAGLAAIGSGAAAIGVGHV) and 53–73 (LFIGIAFAEALGIFAFLVALL).

It belongs to the ATPase C chain family. In terms of assembly, F-type ATPases have 2 components, F(1) - the catalytic core - and F(0) - the membrane proton channel. F(1) has five subunits: alpha(3), beta(3), gamma(1), delta(1), epsilon(1). F(0) has four main subunits: a(1), b(1), b'(1) and c(10-14). The alpha and beta chains form an alternating ring which encloses part of the gamma chain. F(1) is attached to F(0) by a central stalk formed by the gamma and epsilon chains, while a peripheral stalk is formed by the delta, b and b' chains.

The protein localises to the cell inner membrane. Functionally, f(1)F(0) ATP synthase produces ATP from ADP in the presence of a proton or sodium gradient. F-type ATPases consist of two structural domains, F(1) containing the extramembraneous catalytic core and F(0) containing the membrane proton channel, linked together by a central stalk and a peripheral stalk. During catalysis, ATP synthesis in the catalytic domain of F(1) is coupled via a rotary mechanism of the central stalk subunits to proton translocation. Its function is as follows. Key component of the F(0) channel; it plays a direct role in translocation across the membrane. A homomeric c-ring of between 10-14 subunits forms the central stalk rotor element with the F(1) delta and epsilon subunits. The sequence is that of ATP synthase subunit c from Jannaschia sp. (strain CCS1).